The following is a 430-amino-acid chain: Histidinol dehydrogenase (430 aa).

NAD(+) is bound by residues tyrosine 131, glutamine 192, and asparagine 215. Positions 238, 260, and 263 each coordinate substrate. The Zn(2+) site is built by glutamine 260 and histidine 263. Active-site proton acceptor residues include glutamate 328 and histidine 329. Substrate contacts are provided by histidine 329, aspartate 362, glutamate 416, and histidine 421. Aspartate 362 lines the Zn(2+) pocket. Position 421 (histidine 421) interacts with Zn(2+).

This sequence belongs to the histidinol dehydrogenase family. It depends on Zn(2+) as a cofactor.

The enzyme catalyses L-histidinol + 2 NAD(+) + H2O = L-histidine + 2 NADH + 3 H(+). It functions in the pathway amino-acid biosynthesis; L-histidine biosynthesis; L-histidine from 5-phospho-alpha-D-ribose 1-diphosphate: step 9/9. Its function is as follows. Catalyzes the sequential NAD-dependent oxidations of L-histidinol to L-histidinaldehyde and then to L-histidine. In Acinetobacter baylyi (strain ATCC 33305 / BD413 / ADP1), this protein is Histidinol dehydrogenase.